Reading from the N-terminus, the 532-residue chain is Chaperonin GroEL 2 (532 aa).

Residues 30–33 (TLGP), lysine 51, 87–91 (DGTTT), glycine 415, 479–481 (NAA), and aspartate 495 each bind ATP.

It belongs to the chaperonin (HSP60) family. In terms of assembly, forms a cylinder of 14 subunits composed of two heptameric rings stacked back-to-back. Interacts with the co-chaperonin GroES.

It is found in the cytoplasm. It carries out the reaction ATP + H2O + a folded polypeptide = ADP + phosphate + an unfolded polypeptide.. Its function is as follows. Together with its co-chaperonin GroES, plays an essential role in assisting protein folding. The GroEL-GroES system forms a nano-cage that allows encapsulation of the non-native substrate proteins and provides a physical environment optimized to promote and accelerate protein folding. The sequence is that of Chaperonin GroEL 2 from Vibrio parahaemolyticus serotype O3:K6 (strain RIMD 2210633).